The primary structure comprises 162 residues: Small ribosomal subunit protein uS7m (162 aa).

The protein belongs to the universal ribosomal protein uS7 family. In terms of assembly, part of the small ribosomal subunit.

The protein localises to the mitochondrion. Functionally, one of the primary rRNA binding proteins, it binds directly to 16S-like rRNA where it nucleates assembly of the head domain of the small subunit. The sequence is that of Small ribosomal subunit protein uS7m (mrps7) from Dictyostelium discoideum (Social amoeba).